Consider the following 619-residue polypeptide: ATP-dependent zinc metalloprotease FtsH 1 (619 aa).

Residues 1 to 8 (MADEKRPA) are Cytoplasmic-facing. Residues 9–29 (SRAWLGYLLIAVGILVLSGIV) traverse the membrane as a helical segment. At 30–108 (RSRGRPLVPY…RIEAKSPQTS (79 aa)) the chain is on the periplasmic side. The chain crosses the membrane as a helical span at residues 109–129 (VWMQVAIWMLPLVLINAAFFM). Topologically, residues 130–619 (MLRRAGQGAG…KIAVGPPSAA (490 aa)) are cytoplasmic. 203-210 (GPPGTGKT) serves as a coordination point for ATP. H426 is a Zn(2+) binding site. The active site involves E427. Zn(2+) contacts are provided by H430 and D503.

It in the central section; belongs to the AAA ATPase family. The protein in the C-terminal section; belongs to the peptidase M41 family. In terms of assembly, homohexamer. The cofactor is Zn(2+).

The protein localises to the cell inner membrane. Acts as a processive, ATP-dependent zinc metallopeptidase for both cytoplasmic and membrane proteins. Plays a role in the quality control of integral membrane proteins. This is ATP-dependent zinc metalloprotease FtsH 1 from Sorangium cellulosum (strain So ce56) (Polyangium cellulosum (strain So ce56)).